The following is a 433-amino-acid chain: MTIQTETSVSAPDLTYSKTRGLVANLSAFMKQRKMGLNDFIQKLSANSYACKHPEVQSILNLTPPQDVELMNSNPSPPPSPSQQINLGPSSNPTAKPSDFDFLKVIGKGSFGKVLLARHRSDEKFYAVKVLQKKAILKKKEEKHIMSERNVLLKNVKHPFLVGLHYSFQTTDKLYFVLDYINGGELFYHLQRERCFLEPRARFYAAEIASALGYLHSLNIVYRDLKPENILLDSQGHIILTDFGLCKENIEPNGTTSTFCGTPEYLAPEVLHKQPYDRTVDWWCLGAVLYEMLYGLPPFYSRNTAEMYDNILNKPLQLKPNISNAARHLLEGLLQKDRTKRLGFTDDFTEIKNHMFFSPINWDDLNAKKLTPPFNPNVTGPNDLRHFDPEFTDEPVPNSIGCSPDSALVTSSITEATEAFLGFSYAPAMDSYL.

Residues 66-92 (QDVELMNSNPSPPPSPSQQINLGPSSN) form a disordered region. Positions 83–92 (QQINLGPSSN) are enriched in polar residues. The Protein kinase domain occupies 100 to 357 (FDFLKVIGKG…FTEIKNHMFF (258 aa)). Residues 106–114 (IGKGSFGKV) and K129 contribute to the ATP site. Residue D224 is the Proton acceptor of the active site. The AGC-kinase C-terminal domain occupies 358–433 (SPINWDDLNA…SYAPAMDSYL (76 aa)).

This sequence belongs to the protein kinase superfamily. AGC Ser/Thr protein kinase family.

It localises to the cytoplasm. The protein localises to the nucleus. The protein resides in the endoplasmic reticulum. The catalysed reaction is L-seryl-[protein] + ATP = O-phospho-L-seryl-[protein] + ADP + H(+). It carries out the reaction L-threonyl-[protein] + ATP = O-phospho-L-threonyl-[protein] + ADP + H(+). Functionally, protein kinase that may play an important role in cellular stress response. May be involved in the regulation of processes such as cell survival, neuronal excitability and renal sodium excretion. The polypeptide is Serine/threonine-protein kinase Sgk1 (sgk1) (Danio rerio (Zebrafish)).